Here is a 363-residue protein sequence, read N- to C-terminus: Probable L-tyrosine/L-aspartate decarboxylase (363 aa).

The residue at position 224 (lysine 224) is an N6-(pyridoxal phosphate)lysine.

It belongs to the group II decarboxylase family. MfnA subfamily. Requires pyridoxal 5'-phosphate as cofactor.

The catalysed reaction is L-tyrosine + H(+) = tyramine + CO2. It carries out the reaction L-aspartate + H(+) = beta-alanine + CO2. It participates in cofactor biosynthesis; methanofuran biosynthesis. Its pathway is cofactor biosynthesis; coenzyme A biosynthesis. Catalyzes the decarboxylation of L-tyrosine to produce tyramine for methanofuran biosynthesis. Can also catalyze the decarboxylation of L-aspartate to produce beta-alanine for coenzyme A (CoA) biosynthesis. In Methanosphaerula palustris (strain ATCC BAA-1556 / DSM 19958 / E1-9c), this protein is Probable L-tyrosine/L-aspartate decarboxylase.